The primary structure comprises 101 residues: MAKGQSLQDPYLNALRRERIPVSIYLVNGIKLQGQIESFDQFIILLKNTVSQMVYKHAISTVVPARSISHNNNGSSQAQAPQQAVQTTQPVEAIVATDKME.

The Sm domain maps to 9–68 (DPYLNALRRERIPVSIYLVNGIKLQGQIESFDQFIILLKNTVSQMVYKHAISTVVPARSI). Positions 68–91 (ISHNNNGSSQAQAPQQAVQTTQPV) are disordered. The span at 77 to 91 (QAQAPQQAVQTTQPV) shows a compositional bias: low complexity.

This sequence belongs to the Hfq family. As to quaternary structure, homohexamer.

In terms of biological role, RNA chaperone that binds small regulatory RNA (sRNAs) and mRNAs to facilitate mRNA translational regulation in response to envelope stress, environmental stress and changes in metabolite concentrations. Also binds with high specificity to tRNAs. The polypeptide is RNA-binding protein Hfq (Haemophilus ducreyi (strain 35000HP / ATCC 700724)).